The following is a 390-amino-acid chain: Alcohol dehydrogenase-like 7 (390 aa).

Residues Cys-56, Ser-58, His-78, Cys-108, Cys-111, Cys-114, Cys-122, and Cys-187 each contribute to the Zn(2+) site. Ser-58 and His-78 together coordinate an alcohol. Residue Ser-58 participates in NAD(+) binding. NAD(+) is bound by residues 212-217, Asp-236, Lys-241, 306-308, Phe-334, and Arg-384; these read GLGSIG and LGV.

Belongs to the zinc-containing alcohol dehydrogenase family. Class-III subfamily. In terms of assembly, homodimer. Zn(2+) serves as cofactor.

Its subcellular location is the cytoplasm. It catalyses the reaction a primary alcohol + NAD(+) = an aldehyde + NADH + H(+). It carries out the reaction a secondary alcohol + NAD(+) = a ketone + NADH + H(+). This Arabidopsis thaliana (Mouse-ear cress) protein is Alcohol dehydrogenase-like 7.